The sequence spans 354 residues: 4-hydroxy-3-methylbut-2-en-1-yl diphosphate synthase (flavodoxin) (354 aa).

Residues Cys262, Cys265, Cys297, and Glu304 each coordinate [4Fe-4S] cluster.

It belongs to the IspG family. The cofactor is [4Fe-4S] cluster.

It carries out the reaction (2E)-4-hydroxy-3-methylbut-2-enyl diphosphate + oxidized [flavodoxin] + H2O + 2 H(+) = 2-C-methyl-D-erythritol 2,4-cyclic diphosphate + reduced [flavodoxin]. Its pathway is isoprenoid biosynthesis; isopentenyl diphosphate biosynthesis via DXP pathway; isopentenyl diphosphate from 1-deoxy-D-xylulose 5-phosphate: step 5/6. Converts 2C-methyl-D-erythritol 2,4-cyclodiphosphate (ME-2,4cPP) into 1-hydroxy-2-methyl-2-(E)-butenyl 4-diphosphate. This chain is 4-hydroxy-3-methylbut-2-en-1-yl diphosphate synthase (flavodoxin), found in Helicobacter hepaticus (strain ATCC 51449 / 3B1).